Here is a 579-residue protein sequence, read N- to C-terminus: UvrABC system protein C (579 aa).

Residues 12–89 (DATGVYIFRD…IKRYRPPYNV (78 aa)) form the GIY-YIG domain. A UVR domain is found at 193–228 (QEVIEVLEEEMKEASERLEFERAARIRDQIESIREV).

Belongs to the UvrC family. In terms of assembly, interacts with UvrB in an incision complex.

The protein localises to the cytoplasm. Functionally, the UvrABC repair system catalyzes the recognition and processing of DNA lesions. UvrC both incises the 5' and 3' sides of the lesion. The N-terminal half is responsible for the 3' incision and the C-terminal half is responsible for the 5' incision. The protein is UvrABC system protein C of Methanothermobacter thermautotrophicus (strain ATCC 29096 / DSM 1053 / JCM 10044 / NBRC 100330 / Delta H) (Methanobacterium thermoautotrophicum).